Reading from the N-terminus, the 186-residue chain is RIO-type serine/threonine-protein kinase Rio1 (186 aa).

Residue Lys-15 participates in ATP binding. Asp-124 serves as the catalytic Proton acceptor. Mg(2+) contacts are provided by Asn-129 and Asp-140. Residue Asp-140 is the 4-aspartylphosphate intermediate of the active site.

Belongs to the protein kinase superfamily. RIO-type Ser/Thr kinase family.

The enzyme catalyses L-seryl-[protein] + ATP = O-phospho-L-seryl-[protein] + ADP + H(+). The catalysed reaction is L-threonyl-[protein] + ATP = O-phospho-L-threonyl-[protein] + ADP + H(+). It catalyses the reaction ATP + H2O = ADP + phosphate + H(+). Functionally, despite the protein kinase domain is proposed to act predominantly as an ATPase. The protein is RIO-type serine/threonine-protein kinase Rio1 (rio1) of Thermoplasma acidophilum (strain ATCC 25905 / DSM 1728 / JCM 9062 / NBRC 15155 / AMRC-C165).